A 948-amino-acid polypeptide reads, in one-letter code: Sensor histidine kinase RcsC (948 aa).

The Cytoplasmic segment spans residues 1-20 (MKYLASFRTTLKVSRYLFRA). Residues 21–41 (LALLIWLLIAFVSVFYIVNAL) form a helical membrane-spanning segment. At 42–313 (HQRESEIRQE…PVDLVLERIR (272 aa)) the chain is on the periplasmic side. Residues 314–334 (ILILNAILLNVLVGAGLFTLA) traverse the membrane as a helical segment. The Cytoplasmic portion of the chain corresponds to 335 to 948 (RMYERRIFIP…YAERVRKTRA (614 aa)). Positions 357–425 (QFNRKIVASA…VLTSNNTNLQ (69 aa)) constitute a PAS domain. The Histidine kinase domain occupies 476–692 (TVSHELRTPL…QFTLRIPLYG (217 aa)). His-479 is modified (phosphohistidine; by autocatalysis). Residues 705–805 (AGTCCWLAVR…ARIYSIELDS (101 aa)) enclose the ABL domain. Residues 826–940 (MILVVDDHPI…ALKQTLAVYA (115 aa)) form the Response regulatory domain. At Asp-875 the chain carries 4-aspartylphosphate.

This sequence belongs to the RcsC family. Interacts with RcsD. Post-translationally, autophosphorylated. Activation probably requires a transfer of a phosphate group from a His in the transmitter domain to an Asp in the receiver domain.

The protein resides in the cell inner membrane. The enzyme catalyses ATP + protein L-histidine = ADP + protein N-phospho-L-histidine.. Component of the Rcs signaling system, which controls transcription of numerous genes. RcsC functions as a membrane-associated protein kinase that phosphorylates RcsD in response to environmental signals. The phosphoryl group is then transferred to the response regulator RcsB. In Salmonella typhi, this protein is Sensor histidine kinase RcsC.